We begin with the raw amino-acid sequence, 600 residues long: L-galactono-1,4-lactone dehydrogenase, mitochondrial (600 aa).

Residues 1 to 25 (MLRSLLLRRSNARSLRPPFPPLRTL) constitute a mitochondrion transit peptide. The interval 16–51 (RPPFPPLRTLCTSGQTLTPAPPPPPPPPPPISSSAS) is disordered. A propeptide spans 26 to 91 (CTSGQTLTPA…AKHKKAQIFR (66 aa)) (removed in mature form). Residues 34–46 (PAPPPPPPPPPPI) show a composition bias toward pro residues. A helical membrane pass occupies residues 58 to 74 (YAGYAALALFSGAATYF). Positions 108 to 279 (THEVQTRNFN…AEVTLQCVER (172 aa)) constitute an FAD-binding PCMH-type domain.

Requires FAD as cofactor.

It is found in the mitochondrion membrane. It carries out the reaction L-galactono-1,4-lactone + 4 Fe(III)-[cytochrome c] = L-dehydroascorbate + 4 Fe(II)-[cytochrome c] + 5 H(+). It functions in the pathway cofactor biosynthesis; L-ascorbate biosynthesis. With respect to regulation, inhibited by sulfhydryl-modifying agents such as N-ethylmaleimide, monoiodoacetic acid and p-hydroxymercuribenzoic acid. No inhibition by riboflavin and lycorine. In terms of biological role, involved in the biosynthesis of ascorbic acid. Uses L-galactono-1,4-lactone as substrate, but not L-gulono-1,4-lactone, D-galactono-1,4-lactone, D-gulono-1,4-lactone, D-erythronic-1,4-lactone, D-xylonic-1,4-lactone, L-mannono-1,4-lactone, D-galactonic acid, D-glucuronic acid or D-gluconic acid. FAD, NAD, NADP and O(2) cannot act as electron acceptor. The polypeptide is L-galactono-1,4-lactone dehydrogenase, mitochondrial (Brassica oleracea (Wild cabbage)).